Reading from the N-terminus, the 188-residue chain is dCTP deaminase (188 aa).

Residues 111-116 (KSTYAR), 135-137 (TLE), Q156, Y170, K179, and Q180 each bind dCTP. Residue E137 is the Proton donor/acceptor of the active site.

This sequence belongs to the dCTP deaminase family. In terms of assembly, homotrimer.

It carries out the reaction dCTP + H2O + H(+) = dUTP + NH4(+). It participates in pyrimidine metabolism; dUMP biosynthesis; dUMP from dCTP (dUTP route): step 1/2. Functionally, catalyzes the deamination of dCTP to dUTP. The chain is dCTP deaminase from Rickettsia akari (strain Hartford).